The following is an 832-amino-acid chain: pre-rRNA 2'-O-ribose RNA methyltransferase FTSJ3 (832 aa).

The S-adenosyl-L-methionine site is built by G56, W58, D76, D92, and D117. The Proton acceptor role is filled by K157. 3 disordered regions span residues 332 to 358 (INLSSGEEEEGREEEEKTSPKAAADEM), 485 to 523 (RLERERREQGVKRVKPKVEEEEEEEEEEENPLLVPLEEK), and 546 to 631 (DADE…GLVE). 2 stretches are compositionally biased toward basic and acidic residues: residues 345–358 (EEEKTSPKAAADEM) and 485–495 (RLERERREQGV). A compositionally biased stretch (acidic residues) spans 503–514 (EEEEEEEEEEEN). Positions 570–579 (KTKKKGQKKK) are enriched in basic residues. The segment covering 600–618 (AEAEAEQSSDDDSSSDEEG) has biased composition (acidic residues). The stretch at 726 to 758 (IKKVAEAKARKKRRMLKKMEQMKKKAEAVVSTV) forms a coiled coil. A disordered region spans residues 795–832 (GPRVRRPPGVKGQFKVVDSRLKKDVRAQKRKEQKKRRK). The span at 811 to 821 (VDSRLKKDVRA) shows a compositional bias: basic and acidic residues. Over residues 822–832 (QKRKEQKKRRK) the composition is skewed to basic residues.

It belongs to the class I-like SAM-binding methyltransferase superfamily. RNA methyltransferase RlmE family. SPB1 subfamily. As to quaternary structure, interacts with NIP7.

It localises to the nucleus. Its subcellular location is the nucleolus. The catalysed reaction is a ribonucleotide in rRNA + S-adenosyl-L-methionine = a 2'-O-methylribonucleotide in rRNA + S-adenosyl-L-homocysteine + H(+). In terms of biological role, RNA 2'-O-methyltransferase involved in the processing of the 34S pre-rRNA to 18S rRNA and in 40S ribosomal subunit formation. This chain is pre-rRNA 2'-O-ribose RNA methyltransferase FTSJ3, found in Gallus gallus (Chicken).